The primary structure comprises 431 residues: Aspartokinase (431 aa).

It belongs to the aspartokinase family.

It carries out the reaction L-aspartate + ATP = 4-phospho-L-aspartate + ADP. Its pathway is amino-acid biosynthesis; L-lysine biosynthesis via DAP pathway; (S)-tetrahydrodipicolinate from L-aspartate: step 1/4. It participates in amino-acid biosynthesis; L-methionine biosynthesis via de novo pathway; L-homoserine from L-aspartate: step 1/3. The protein operates within amino-acid biosynthesis; L-threonine biosynthesis; L-threonine from L-aspartate: step 1/5. This chain is Aspartokinase (lysC), found in Chlamydia trachomatis serovar D (strain ATCC VR-885 / DSM 19411 / UW-3/Cx).